A 158-amino-acid chain; its full sequence is NAD(P)H-quinone oxidoreductase subunit J, chloroplastic (158 aa).

This sequence belongs to the complex I 30 kDa subunit family. NDH is composed of at least 16 different subunits, 5 of which are encoded in the nucleus.

The protein localises to the plastid. It localises to the chloroplast thylakoid membrane. The enzyme catalyses a plastoquinone + NADH + (n+1) H(+)(in) = a plastoquinol + NAD(+) + n H(+)(out). The catalysed reaction is a plastoquinone + NADPH + (n+1) H(+)(in) = a plastoquinol + NADP(+) + n H(+)(out). Its function is as follows. NDH shuttles electrons from NAD(P)H:plastoquinone, via FMN and iron-sulfur (Fe-S) centers, to quinones in the photosynthetic chain and possibly in a chloroplast respiratory chain. The immediate electron acceptor for the enzyme in this species is believed to be plastoquinone. Couples the redox reaction to proton translocation, and thus conserves the redox energy in a proton gradient. The protein is NAD(P)H-quinone oxidoreductase subunit J, chloroplastic of Olimarabidopsis pumila (Dwarf rocket).